A 217-amino-acid polypeptide reads, in one-letter code: Large ribosomal subunit protein bL25 (217 aa).

The protein belongs to the bacterial ribosomal protein bL25 family. CTC subfamily. As to quaternary structure, part of the 50S ribosomal subunit; part of the 5S rRNA/L5/L18/L25 subcomplex. Contacts the 5S rRNA. Binds to the 5S rRNA independently of L5 and L18.

This is one of the proteins that binds to the 5S RNA in the ribosome where it forms part of the central protuberance. This Methylobacterium sp. (strain 4-46) protein is Large ribosomal subunit protein bL25.